Here is a 1381-residue protein sequence, read N- to C-terminus: Hepatocyte growth factor receptor (1381 aa).

The N-terminal stretch at 1–24 (MKAPAVLAPGILVLLFTLVQRSNG) is a signal peptide. Residues 25 to 932 (ECKEALAKSE…VIVQPDQNFT (908 aa)) are Extracellular-facing. A Sema domain is found at 27–515 (KEALAKSEMN…TGKKITKIPL (489 aa)). An N-linked (GlcNAc...) asparagine glycan is attached at Asn-45. Intrachain disulfides connect Cys-95/Cys-101, Cys-98/Cys-160, Cys-133/Cys-141, and Cys-172/Cys-175. Asn-106 carries N-linked (GlcNAc...) asparagine glycosylation. Asn-149 carries an N-linked (GlcNAc...) asparagine glycan. N-linked (GlcNAc...) asparagine glycosylation occurs at Asn-202. 2 disulfides stabilise this stretch: Cys-298-Cys-363 and Cys-385-Cys-397. N-linked (GlcNAc...) asparagine glycans are attached at residues Asn-399 and Asn-405. Intrachain disulfides connect Cys-520-Cys-538, Cys-526-Cys-561, Cys-529-Cys-545, and Cys-541-Cys-551. IPT/TIG domains lie at 563–655 (PAIY…FSYV), 657–739 (PIIT…FSYR), and 742–836 (PIVY…LIYV). A glycan (O-linked (Man) threonine) is linked at Thr-582. Residues Asn-607 and Asn-635 are each glycosylated (N-linked (GlcNAc...) asparagine). 2 O-linked (Man) threonine glycosylation sites follow: Thr-676 and Thr-761. Asn-785, Asn-879, and Asn-930 each carry an N-linked (GlcNAc...) asparagine glycan. The chain crosses the membrane as a helical span at residues 933-955 (GLIAGVVSISIALLLLLGLFLWL). Over 956–1381 (KKRKQIKDLG…EDNADDEVDT (426 aa)) the chain is Cytoplasmic. Position 966 is a phosphoserine (Ser-966). At Thr-977 the chain carries Phosphothreonine. A phosphoserine mark is found at Ser-990, Ser-997, and Ser-1000. Residue Tyr-1003 is modified to Phosphotyrosine. The Protein kinase domain maps to 1078-1345 (VHFNEVIGRG…RISAIFSTFI (268 aa)). ATP contacts are provided by residues 1084 to 1092 (IGRGHFGCV) and Lys-1110. The active-site Proton acceptor is Asp-1204. Positions 1212 to 1381 (LDEKFTVKVA…EDNADDEVDT (170 aa)) are interaction with RANBP9. Tyr-1230 carries the phosphotyrosine modification. A phosphotyrosine; by autocatalysis mark is found at Tyr-1234 and Tyr-1235. Residue Thr-1289 is modified to Phosphothreonine. The tract at residues 1320-1359 (WHPKAEMRPSFSELVSRISAIFSTFIGEHYVHVNATYVNV) is interaction with MUC20. Tyr-1349 and Tyr-1356 each carry phosphotyrosine; by autocatalysis. Residue Tyr-1365 is modified to Phosphotyrosine.

This sequence belongs to the protein kinase superfamily. Tyr protein kinase family. Heterodimer made of an alpha chain (50 kDa) and a beta chain (145 kDa) which are disulfide linked. Binds PLXNB1. Interacts when phosphorylated with downstream effectors including STAT3, PIK3R1, SRC, PCLG1, GRB2 and GAB1. Interacts with SPSB1, SPSB2 and SPSB4. Interacts with INPP5D/SHIP1. When phosphorylated at Tyr-1356, interacts with INPPL1/SHIP2. Interacts with RANBP9 and RANBP10, as well as SPSB1, SPSB2, SPSB3 and SPSB4. SPSB1 binding occurs in the presence and in the absence of HGF, however HGF treatment has a positive effect on this interaction. Interacts with MUC20; prevents interaction with GRB2 and suppresses hepatocyte growth factor-induced cell proliferation. Interacts with GRB10. Interacts with PTPN1 and PTPN2. Interacts with HSP90AA1 and HSP90AB1; the interaction suppresses MET kinase activity. Interacts with tensin TNS3. Interacts (when phosphorylated) with tensin TNS4 (via SH2 domain); the interaction increases MET protein stability by inhibiting MET endocytosis and subsequent lysosomal degradation. In terms of processing, autophosphorylated in response to ligand binding on Tyr-1234 and Tyr-1235 in the kinase domain leading to further phosphorylation of Tyr-1349 and Tyr-1356 in the C-terminal multifunctional docking site. Dephosphorylated by PTPRJ at Tyr-1349 and Tyr-1365. Dephosphorylated by PTPN1 and PTPN2. Post-translationally, ubiquitinated. Ubiquitination by CBL regulates the receptor stability and activity through proteasomal degradation. O-mannosylation of IPT/TIG domains by TMEM260 is required for protein maturation. O-mannosylated residues are composed of single mannose glycans that are not elongated or modified.

The protein resides in the membrane. It catalyses the reaction L-tyrosyl-[protein] + ATP = O-phospho-L-tyrosyl-[protein] + ADP + H(+). With respect to regulation, in its inactive state, the C-terminal tail interacts with the catalytic domain and inhibits the kinase activity. Upon ligand binding, the C-terminal tail is displaced and becomes phosphorylated, thus increasing the kinase activity. Its function is as follows. Receptor tyrosine kinase that transduces signals from the extracellular matrix into the cytoplasm by binding to hepatocyte growth factor/HGF ligand. Regulates many physiological processes including proliferation, scattering, morphogenesis and survival. Ligand binding at the cell surface induces autophosphorylation of MET on its intracellular domain that provides docking sites for downstream signaling molecules. Following activation by ligand, interacts with the PI3-kinase subunit PIK3R1, PLCG1, SRC, GRB2, STAT3 or the adapter GAB1. Recruitment of these downstream effectors by MET leads to the activation of several signaling cascades including the RAS-ERK, PI3 kinase-AKT, or PLCgamma-PKC. The RAS-ERK activation is associated with the morphogenetic effects while PI3K/AKT coordinates prosurvival effects. During embryonic development, MET signaling plays a role in gastrulation, development and migration of muscles and neuronal precursors, angiogenesis and kidney formation. In adults, participates in wound healing as well as organ regeneration and tissue remodeling. Also promotes differentiation and proliferation of hematopoietic cells. The chain is Hepatocyte growth factor receptor (MET) from Colobus guereza (Mantled guereza).